Consider the following 272-residue polypeptide: 2-amino-3,7-dideoxy-D-threo-hept-6-ulosonate synthase (272 aa).

Catalysis depends on Asp33, which acts as the Proton acceptor. 1-deoxy-D-threo-hexo-2,5-diulose 6-phosphate is bound by residues 33–37 and 153–155; these read DHGVS and YPR. The active-site Proton donor is the Tyr153. The active-site Schiff-base intermediate with substrate is Lys184. 1-deoxy-D-threo-hexo-2,5-diulose 6-phosphate is bound by residues 209–210 and 237–238; these read GG and GR.

Belongs to the DeoC/FbaB aldolase family. ADHS subfamily. Homodecamer.

The enzyme catalyses 1-deoxy-D-threo-hexo-2,5-diulose 6-phosphate + L-aspartate 4-semialdehyde = 2,3-dioxopropyl phosphate + 2-amino-2,3,7-trideoxy-D-lyxo-hept-6-ulosonate. Its function is as follows. Catalyzes a transaldol reaction between 6-deoxy-5-ketofructose 1-phosphate (DKFP) and L-aspartate semialdehyde (ASA) with an elimination of hydroxypyruvaldehyde phosphate to yield 2-amino-3,7-dideoxy-D-threo-hept-6-ulosonate (ADH). Plays a key role in an alternative pathway of the biosynthesis of 3-dehydroquinate (DHQ), which is involved in the canonical pathway for the biosynthesis of aromatic amino acids. This is 2-amino-3,7-dideoxy-D-threo-hept-6-ulosonate synthase from Methanococcus maripaludis (strain C5 / ATCC BAA-1333).